The following is a 301-amino-acid chain: Protoheme IX farnesyltransferase 2 (301 aa).

9 helical membrane passes run 29–49 (VVALMLLTVLVGMCLAVPTAV), 51–71 (VQPLIAGMFGIALMAGSAAAL), 101–121 (ALIFAASIGGLGFVVLYVLVN), 123–143 (LTAWLTFASLIGYALVYTAYL), 150–170 (NIVIGGLAGAMPPLLGWTAVT), 177–197 (ALLLVIIIFTWTPPHFWALAI), 223–243 (CILLYTVLLAIACLLPVLVGM), 244–264 (CGPMYFVCSSLLSSVFIYKAW), and 281–301 (FSIYHLMLLFMALLIDHYLWS).

This sequence belongs to the UbiA prenyltransferase family. Protoheme IX farnesyltransferase subfamily.

The protein localises to the cell inner membrane. The catalysed reaction is heme b + (2E,6E)-farnesyl diphosphate + H2O = Fe(II)-heme o + diphosphate. The protein operates within porphyrin-containing compound metabolism; heme O biosynthesis; heme O from protoheme: step 1/1. In terms of biological role, converts heme B (protoheme IX) to heme O by substitution of the vinyl group on carbon 2 of heme B porphyrin ring with a hydroxyethyl farnesyl side group. The protein is Protoheme IX farnesyltransferase 2 of Shewanella sp. (strain W3-18-1).